The following is a 393-amino-acid chain: MTRVVLAAAYRTPIGVFGGAFKDVPAYDLGATLIEHIIKETGLNPSEIDEVIIGNVLQAGQGQNPARIAAMKGGLPETVPAFTVNKVCGSGLKSIQLAYQSIVTGENDIVLAGGMENMSQSPMLVNNSRFGFKMGHQSMVDSMVYDGLTDVFNQYHMGITAENLAEQYGISREEQDTFAVNSQQKAVRAQQNGEFDSEIVPVSIPQRKGEPIVVTKDEGVRENVSVEKLSRLRPAFKKDGTVTAGNASGINDGAAMMLVMSEDKAKELNIEPLAVLDGFGSHGVDPSIMGIAPVGAVEKALKRSKKELSDIDVFELNEAFAAQSLAVDRELKLPPEKVNVKGGAIALGHPIGASGARVLVTLLHQLNDEVETGLTSLCIGGGQAIAAVVSKYK.

Cys-88 acts as the Acyl-thioester intermediate in catalysis. Catalysis depends on proton acceptor residues His-349 and Cys-378.

This sequence belongs to the thiolase-like superfamily. Thiolase family.

It is found in the cytoplasm. It catalyses the reaction 2 acetyl-CoA = acetoacetyl-CoA + CoA. This chain is Probable acetyl-CoA acyltransferase, found in Staphylococcus aureus (strain COL).